We begin with the raw amino-acid sequence, 1811 residues long: ADP-ribosylation factor guanine nucleotide-exchange factor sec71 (1811 aa).

2 disordered regions span residues 1-108 (MTDL…TSEA) and 316-336 (INMNKSSSNGTPDRANSPIPS). Basic and acidic residues-rich tracts occupy residues 33–49 (STIKSRVSDEIDEHDSI), 57–73 (KSIEINDKNLEAEKDIE), and 80–91 (PPEDDLDSRSIE). A Phosphoserine modification is found at Ser-40. Composition is skewed to polar residues over residues 92–108 (SEQTGTLSKQTTSTSEA) and 316–326 (INMNKSSSNGT). Thr-326 bears the Phosphothreonine mark. Residues Ser-332 and Ser-353 each carry the phosphoserine modification. Positions 533 to 537 (NYDCI) match the HUS box motif. Residues 643-663 (TAKDDETESTSKGEEPQKSKS) are compositionally biased toward basic and acidic residues. The interval 643 to 688 (TAKDDETESTSKGEEPQKSKSEPPSAGINSTSMDNLESSGQALATD) is disordered. The span at 669–688 (GINSTSMDNLESSGQALATD) shows a compositional bias: polar residues. Residues 692-880 (QFENLKHRKK…TEVYEEIQKN (189 aa)) form the SEC7 domain. Ser-741 is subject to Phosphoserine. A Phosphothreonine modification is found at Thr-742. A Mg(2+)-binding site is contributed by Asp-812. Residues 889–1103 (DPTSNFPEIP…TTKPLRKSLD (215 aa)) form an HDS1 domain region.

The protein localises to the cytoplasm. The protein resides in the golgi apparatus. It is found in the trans-Golgi network. It localises to the cytoplasmic vesicle. Its subcellular location is the COPI-coated vesicle membrane. The protein localises to the COPII-coated vesicle membrane. Its function is as follows. Guanine exchange factor that acts as an activator of arf1 at the trans-Golgi net-work and is thus involved in vesicular budding and traffic between compartments of the Golgi apparatus. Activation of Arf (ADP-ribosylation factor) GTPases is essential for vesicle formation via recruitment of cargo adapters and coat proteins necessary for Golgi trafficking. Involved in tunicamycin-induced ER stress response and subsequent apoptosis. In Schizosaccharomyces pombe (strain 972 / ATCC 24843) (Fission yeast), this protein is ADP-ribosylation factor guanine nucleotide-exchange factor sec71.